Reading from the N-terminus, the 156-residue chain is Small ribosomal subunit protein uS7 (156 aa).

The protein belongs to the universal ribosomal protein uS7 family. In terms of assembly, part of the 30S ribosomal subunit. Contacts proteins S9 and S11.

In terms of biological role, one of the primary rRNA binding proteins, it binds directly to 16S rRNA where it nucleates assembly of the head domain of the 30S subunit. Is located at the subunit interface close to the decoding center, probably blocks exit of the E-site tRNA. The polypeptide is Small ribosomal subunit protein uS7 (Klebsiella pneumoniae (strain 342)).